Consider the following 330-residue polypeptide: Clavaminate synthase-like protein At3g21360 (330 aa).

Ala2 carries the N-acetylalanine modification. Positions 120, 122, and 313 each coordinate Fe cation.

Requires Fe cation as cofactor.

The chain is Clavaminate synthase-like protein At3g21360 from Arabidopsis thaliana (Mouse-ear cress).